The following is a 610-amino-acid chain: Dapper homolog 3 (610 aa).

Phosphoserine is present on Ser-6. Disordered stretches follow at residues 50 to 76 (PGMGGAEAEDEEDAEEDEDAAAARRAA), 102 to 179 (LESG…SVGA), and 200 to 579 (TCSS…PAGP). The segment covering 56–69 (EAEDEEDAEEDEDA) has biased composition (acidic residues). Residues 63–87 (AEEDEDAAAARRAAAALEEQLEALP) adopt a coiled-coil conformation. Residues 120-138 (DPSSTGGPDSPPSTFCGDS) are compositionally biased toward low complexity. Residues Ser-165 and Ser-237 each carry the phosphoserine modification. Arg-255 carries the post-translational modification Omega-N-methylarginine. Over residues 317–331 (PPEPAPPAAASPPSS) the composition is skewed to pro residues. The segment covering 344–356 (PGAPAASRGLPGR) has biased composition (low complexity). Phosphoserine occurs at positions 409 and 456. Residues 475-485 (PRGPAPSPSAP) are compositionally biased toward pro residues. Residues 524 to 545 (ESESSASEGESPAFSSASSDSD) show a composition bias toward low complexity. Residues 566–576 (GPGGAAGGGTP) show a composition bias toward gly residues. The short motif at 607-610 (MTTV) is the PDZ-binding element.

This sequence belongs to the dapper family. In terms of assembly, can form homodimers and heterodimers with DACT1 or DACT3. Interacts with CSNK1D, PKA catalytic subunit, PKC-type kinase, DVL1, DVL2, DVL3, VANGL1, VANGL2 and CTNND1. As to expression, expressed in brain and uterus.

Its function is as follows. May be involved in regulation of intracellular signaling pathways during development. Specifically thought to play a role in canonical and/or non-canonical Wnt signaling pathways through interaction with DSH (Dishevelled) family proteins. This is Dapper homolog 3 (Dact3) from Mus musculus (Mouse).